Consider the following 511-residue polypeptide: GMP synthase [glutamine-hydrolyzing] (511 aa).

Positions 5 to 195 (DILVLDFGSQ…AKYACNCESV (191 aa)) constitute a Glutamine amidotransferase type-1 domain. Cys82 functions as the Nucleophile in the catalytic mechanism. Catalysis depends on residues His169 and Glu171. Positions 196–386 (WNMGSFAKTQ…LGLSKEVVYR (191 aa)) constitute a GMPS ATP-PPase domain. 223–229 (SGGVDSS) serves as a coordination point for ATP.

In terms of assembly, homodimer.

It carries out the reaction XMP + L-glutamine + ATP + H2O = GMP + L-glutamate + AMP + diphosphate + 2 H(+). The protein operates within purine metabolism; GMP biosynthesis; GMP from XMP (L-Gln route): step 1/1. In terms of biological role, catalyzes the synthesis of GMP from XMP. This chain is GMP synthase [glutamine-hydrolyzing], found in Campylobacter jejuni subsp. doylei (strain ATCC BAA-1458 / RM4099 / 269.97).